A 423-amino-acid chain; its full sequence is Adenylosuccinate synthetase (423 aa).

GTP is bound by residues 12–18 (GDEGKGK) and 40–42 (GHT). Asp-13 serves as the catalytic Proton acceptor. Residues Asp-13 and Gly-40 each contribute to the Mg(2+) site. IMP contacts are provided by residues 13-16 (DEGK), 38-41 (NAGH), Thr-129, Arg-143, Gln-221, Thr-236, and Arg-300. Residue His-41 is the Proton donor of the active site. Residue 296–302 (AVTGRKR) coordinates substrate. GTP-binding positions include Arg-302, 328-330 (KSD), and 408-410 (SVG).

It belongs to the adenylosuccinate synthetase family. As to quaternary structure, homodimer. Mg(2+) is required as a cofactor.

Its subcellular location is the cytoplasm. The enzyme catalyses IMP + L-aspartate + GTP = N(6)-(1,2-dicarboxyethyl)-AMP + GDP + phosphate + 2 H(+). The protein operates within purine metabolism; AMP biosynthesis via de novo pathway; AMP from IMP: step 1/2. Functionally, plays an important role in the de novo pathway of purine nucleotide biosynthesis. Catalyzes the first committed step in the biosynthesis of AMP from IMP. This chain is Adenylosuccinate synthetase, found in Parabacteroides distasonis (strain ATCC 8503 / DSM 20701 / CIP 104284 / JCM 5825 / NCTC 11152).